Reading from the N-terminus, the 203-residue chain is Cytochrome c biogenesis ATP-binding export protein CcmA (203 aa).

The ABC transporter domain occupies 2-203; sequence LEALDLAGVR…KTSQTVRMGA (202 aa). 34–41 contributes to the ATP binding site; it reads GENGSGKT.

Belongs to the ABC transporter superfamily. CcmA exporter (TC 3.A.1.107) family. As to quaternary structure, the complex is composed of two ATP-binding proteins (CcmA) and two transmembrane proteins (CcmB).

The protein resides in the cell inner membrane. It carries out the reaction heme b(in) + ATP + H2O = heme b(out) + ADP + phosphate + H(+). Functionally, part of the ABC transporter complex CcmAB involved in the biogenesis of c-type cytochromes; once thought to export heme, this seems not to be the case, but its exact role is uncertain. Responsible for energy coupling to the transport system. This Pseudomonas aeruginosa protein is Cytochrome c biogenesis ATP-binding export protein CcmA.